The primary structure comprises 156 residues: MKPGEKQEQLVKAFKALLREERFGSQAEIVTALNEIGFENINQSKVSRMLSRFGAVRTRNAKMEMVYCLPVELGIPTINSPLKNLVLDVDHNGVILVIHTTPGAAQLIARMLDSLGKAEGILGTIAGDDTIFITPTAESDIDELYDSVLELFEHTG.

Belongs to the ArgR family.

It is found in the cytoplasm. It functions in the pathway amino-acid biosynthesis; L-arginine biosynthesis [regulation]. In terms of biological role, regulates arginine biosynthesis genes. This chain is Arginine repressor, found in Tolumonas auensis (strain DSM 9187 / NBRC 110442 / TA 4).